The primary structure comprises 527 residues: Probable feruloyl esterase B-2 (527 aa).

The signal sequence occupies residues 1-19 (MAPIHYLLPIITLGSAALA). 2 cysteine pairs are disulfide-bonded: C28-C75 and C63-C114. Residues N53, N85, N98, N138, and N180 are each glycosylated (N-linked (GlcNAc...) asparagine). Cystine bridges form between C187/C441, C256/C273, C282/C291, and C503/C525. The Acyl-ester intermediate role is filled by S188. Ca(2+) contacts are provided by D257, D260, A262, D264, and I266. N-linked (GlcNAc...) asparagine glycans are attached at residues N311 and N355. Active-site charge relay system residues include D400 and H440. N-linked (GlcNAc...) asparagine glycosylation is present at N516.

Belongs to the tannase family.

Its subcellular location is the secreted. The catalysed reaction is feruloyl-polysaccharide + H2O = ferulate + polysaccharide.. Its function is as follows. Involved in degradation of plant cell walls. Hydrolyzes the feruloyl-arabinose ester bond in arabinoxylans as well as the feruloyl-galactose and feruloyl-arabinose ester bonds in pectin. The chain is Probable feruloyl esterase B-2 (faeB-2) from Aspergillus terreus (strain NIH 2624 / FGSC A1156).